The chain runs to 641 residues: 1-deoxy-D-xylulose-5-phosphate synthase (641 aa).

Thiamine diphosphate contacts are provided by residues His-71 and 112–114 (SHA). Asp-144 provides a ligand contact to Mg(2+). Residues 145–146 (GA), Asn-173, Tyr-284, and Glu-365 each bind thiamine diphosphate. Position 173 (Asn-173) interacts with Mg(2+).

It belongs to the transketolase family. DXPS subfamily. Homodimer. Requires Mg(2+) as cofactor. It depends on thiamine diphosphate as a cofactor.

It carries out the reaction D-glyceraldehyde 3-phosphate + pyruvate + H(+) = 1-deoxy-D-xylulose 5-phosphate + CO2. It participates in metabolic intermediate biosynthesis; 1-deoxy-D-xylulose 5-phosphate biosynthesis; 1-deoxy-D-xylulose 5-phosphate from D-glyceraldehyde 3-phosphate and pyruvate: step 1/1. Functionally, catalyzes the acyloin condensation reaction between C atoms 2 and 3 of pyruvate and glyceraldehyde 3-phosphate to yield 1-deoxy-D-xylulose-5-phosphate (DXP). In Mycobacterium avium (strain 104), this protein is 1-deoxy-D-xylulose-5-phosphate synthase.